The primary structure comprises 232 residues: 2-C-methyl-D-erythritol 4-phosphate cytidylyltransferase (232 aa).

It belongs to the IspD/TarI cytidylyltransferase family. IspD subfamily.

It carries out the reaction 2-C-methyl-D-erythritol 4-phosphate + CTP + H(+) = 4-CDP-2-C-methyl-D-erythritol + diphosphate. It functions in the pathway isoprenoid biosynthesis; isopentenyl diphosphate biosynthesis via DXP pathway; isopentenyl diphosphate from 1-deoxy-D-xylulose 5-phosphate: step 2/6. Functionally, catalyzes the formation of 4-diphosphocytidyl-2-C-methyl-D-erythritol from CTP and 2-C-methyl-D-erythritol 4-phosphate (MEP). The polypeptide is 2-C-methyl-D-erythritol 4-phosphate cytidylyltransferase (Stenotrophomonas maltophilia (strain R551-3)).